The primary structure comprises 79 residues: UPF0180 protein BCAH187_A1552 (79 aa).

Belongs to the UPF0180 family.

The chain is UPF0180 protein BCAH187_A1552 from Bacillus cereus (strain AH187).